The chain runs to 381 residues: G-protein coupled receptor homolog Q2/3L (381 aa).

The Extracellular portion of the chain corresponds to 1–91 (MNYTLSTVSS…HCDDGVDTTS (91 aa)). N-linked (GlcNAc...) asparagine; by host glycosylation is found at Asn2, Asn15, Asn19, Asn41, Asn50, Asn56, and Asn62. A helical membrane pass occupies residues 92–112 (FGLITLYSTIFFLGLFGNIIV). The Cytoplasmic segment spans residues 113–126 (LTVLRKYKIKTIQD). Residues 127–147 (MFLLNLTLSDLIFVLVFPFNL) traverse the membrane as a helical segment. The Extracellular portion of the chain corresponds to 148 to 165 (YDSIAKQWSLGDCLCKFK). Residues 166–186 (AMFYFVGFYNSMSFITLMSID) form a helical membrane-spanning segment. Residues 187–206 (RYLAVVHPVKSMPIRTKRYG) lie on the Cytoplasmic side of the membrane. The chain crosses the membrane as a helical span at residues 207 to 227 (IVLSMVVWIVSTIESFPIMLF). Topologically, residues 228 to 251 (YETKKVYGITYCHVFYNDNAKIWK) are extracellular. Residues 252–272 (LFINFEINIFGMIIPLTILLY) form a helical membrane-spanning segment. Over 273–294 (CYYKILNTLKTSQTKNKKAIKM) the chain is Cytoplasmic. Residues 295–315 (VFLIVICSVLFLLPFSVTVFV) traverse the membrane as a helical segment. Residues 316-336 (SSLYLLNVFSGCMALRFVNLA) lie on the Extracellular side of the membrane. A helical transmembrane segment spans residues 337–357 (VHVAEIVSLCHCFINPLIYAF). The Cytoplasmic portion of the chain corresponds to 358–381 (CSREFTKKLLRLRTTSSAGSISIG).

It belongs to the G-protein coupled receptor 1 family.

It is found in the host cell membrane. In terms of biological role, putative chemokine receptor. The polypeptide is G-protein coupled receptor homolog Q2/3L (Ovis aries (Sheep)).